A 280-amino-acid polypeptide reads, in one-letter code: Probable N-acetyltransferase 14 (280 aa).

Transmembrane regions (helical) follow at residues 37–57 and 60–80; these read LILH…LSSI and CVLH…VIYL. The disordered stretch occupies residues 111–152; sequence PDLPNPHLGRAKLTTNQEKTRRRKKAKEKEKMNESEQVDEDE. Positions 116-273 constitute an N-acetyltransferase domain; sequence PHLGRAKLTT…EKGWLGYPLT (158 aa).

The protein belongs to the camello family.

Its subcellular location is the membrane. Functionally, probable acetyltransferase. This Danio rerio (Zebrafish) protein is Probable N-acetyltransferase 14 (nat14).